The following is a 622-amino-acid chain: Probable E3 ubiquitin-protein ligase DTX2 (622 aa).

WWE domains lie at 8-97 (SLVQ…AVRR) and 98-174 (HLFP…SVRR). Asymmetric dimethylarginine is present on residues Arg213, Arg215, and Arg233. Lys249 bears the N6-acetyllysine mark. 2 disordered regions span residues 249–324 (KPSL…VPMQ) and 355–393 (APQP…EPEP). Arg256 is subject to Omega-N-methylarginine. The segment covering 274–285 (LGSQPLYRSSLS) has biased composition (polar residues). A compositionally biased stretch (low complexity) spans 299–322 (SGAVSASLPSGPSSSPGSVPATVP). Residue Ser360 is modified to Phosphoserine. A compositionally biased stretch (basic residues) spans 372 to 381 (GSVKRLRKMS). The RING-type zinc finger occupies 412-473 (CIICMEKLST…DGSLQCPSCK (62 aa)).

It belongs to the Deltex family. Homodimer. May form a heterodimer with other members of the Deltex family. Interacts with NOTCH1.

The protein resides in the cytoplasm. It localises to the nucleus. The catalysed reaction is S-ubiquitinyl-[E2 ubiquitin-conjugating enzyme]-L-cysteine + [acceptor protein]-L-lysine = [E2 ubiquitin-conjugating enzyme]-L-cysteine + N(6)-ubiquitinyl-[acceptor protein]-L-lysine.. It participates in protein modification; protein ubiquitination. Regulator of Notch signaling, a signaling pathway involved in cell-cell communications that regulates a broad spectrum of cell-fate determinations. Probably acts both as a positive and negative regulator of Notch, depending on the developmental and cell context. Mediates the antineural activity of Notch, possibly by inhibiting the transcriptional activation mediated by MATCH1. Functions as a ubiquitin ligase protein in vitro, suggesting that it may regulate the Notch pathway via some ubiquitin ligase activity. This Homo sapiens (Human) protein is Probable E3 ubiquitin-protein ligase DTX2 (DTX2).